The primary structure comprises 295 residues: Fatty acid desaturase 4-like 1, chloroplastic (295 aa).

A chloroplast-targeting transit peptide spans 1-29 (MAVSFQTKNPLRPITNIPRSYGPTRVRVT). 3 helical membrane-spanning segments follow: residues 72-92 (WVAAGSTTIFASFAKSIIGGF), 102-122 (LACYAGYVFADLGSGVYHWAI), and 175-195 (LAINNPLFHSFVSTFAFCILL).

The protein belongs to the fatty acid desaturase CarF family.

It localises to the plastid. The protein resides in the chloroplast membrane. It functions in the pathway lipid metabolism; fatty acid metabolism. Its function is as follows. Fatty acid desaturase involved in the production of chloroplast-specific phosphatidylglycerol molecular species. Catalyzes the formation of a trans double bond introduced close to the carboxyl group of palmitic acid, which is specifically esterified to the sn-2 glyceryl carbon of phosphatidylglycerol. This is Fatty acid desaturase 4-like 1, chloroplastic (FAD4L1) from Arabidopsis thaliana (Mouse-ear cress).